Consider the following 179-residue polypeptide: MTTSEDQTTPAHLDPKTYPRHLTDPTQNIHLELTYSPLNAQSALDKISSPAAGANVLFLGTTRNTFEDRAVSQLSYTAYPPLTLKTLAGIARDAVAKHGLTGIVIAHRLGVVPIREASIVIAVSSGHRRAAWRAGEEVLEICKEKAEIWKREEFVDGGMEWRENRERDGEGKKVVVSEN.

The segment covering 1–10 (MTTSEDQTTP) has biased composition (polar residues). The tract at residues 1-21 (MTTSEDQTTPAHLDPKTYPRH) is disordered. Substrate is bound by residues 127 to 128 (HR), K143, and 150 to 152 (KRE).

The protein belongs to the MoaE family. MOCS2B subfamily. In terms of assembly, heterotetramer; composed of 2 small (MOCS2A) and 2 large (MOCS2B) subunits.

Its subcellular location is the cytoplasm. The enzyme catalyses 2 [molybdopterin-synthase sulfur-carrier protein]-C-terminal-Gly-aminoethanethioate + cyclic pyranopterin phosphate + H2O = molybdopterin + 2 [molybdopterin-synthase sulfur-carrier protein]-C-terminal Gly-Gly + 2 H(+). It functions in the pathway cofactor biosynthesis; molybdopterin biosynthesis. Functionally, catalytic subunit of the molybdopterin synthase complex, a complex that catalyzes the conversion of precursor Z into molybdopterin. Acts by mediating the incorporation of 2 sulfur atoms from thiocarboxylated MOCS2A into precursor Z to generate a dithiolene group. The protein is Molybdopterin synthase catalytic subunit of Aspergillus oryzae (strain ATCC 42149 / RIB 40) (Yellow koji mold).